The chain runs to 235 residues: Claudin-16 (235 aa).

Over 1 to 3 the chain is Cytoplasmic; the sequence is MKD. The chain crosses the membrane as a helical span at residues 4–24; the sequence is LLQYAACFLAIFSTGFLIVAT. Residues 25-79 are Extracellular-facing; that stretch reads WTDCWMVNADDSLEVSTKCRGLWWECVTNAFDGIRTCDEYDSIYAEHPLKLVVTR. The chain crosses the membrane as a helical span at residues 80–100; it reads ALMITADILAGFGFITLLLGL. The Cytoplasmic portion of the chain corresponds to 101–115; the sequence is DCVKFLPDDPQIKVR. A helical transmembrane segment spans residues 116 to 136; that stretch reads LCFVAGTTLLIAGTPGIIGSV. The Extracellular portion of the chain corresponds to 137–169; the sequence is WYAVDVYVERSSLVLHNIFLGIQYKFGWSCWLG. Residues 170–190 form a helical membrane-spanning segment; the sequence is MAGSLGCFLAGALLTCCLYLF. The Cytoplasmic portion of the chain corresponds to 191-235; the sequence is KDVGPERNYPYAMRKPYSTAGVSMAKSYKAPRTETAKMYAVDTRV. The Interaction with TJP1 signature appears at 233–235; sequence TRV.

The protein belongs to the claudin family. In terms of assembly, can form heteropolymeric tight junction strands with other claudins. Interacts with CLDN19. Cannot form tight junction strands on its own. Interacts (via PDZ-binding motif TRV) with TJP1 (via PDZ domain). As to expression, expressed in the corticomedullary axis of the TAL, specifically in the cortex and the outer stripe of outer medulla (OSOM) zone (at protein level).

It is found in the cell junction. The protein localises to the tight junction. It localises to the cell membrane. The catalysed reaction is Mg(2+)(in) = Mg(2+)(out). It catalyses the reaction Ca(2+)(in) = Ca(2+)(out). The enzyme catalyses Na(+)(in) = Na(+)(out). It carries out the reaction K(+)(in) = K(+)(out). The catalysed reaction is Rb(+)(in) = Rb(+)(out). It catalyses the reaction Cs(+)(in) = Cs(+)(out). The enzyme catalyses Li(+)(in) = Li(+)(out). In terms of biological role, forms paracellular channels: coassembles with CLDN19 into tight junction strands with cation-selective channels through the strands, conveying epithelial permeability in a process known as paracellular tight junction permeability. Involved in the maintenance of ion gradients along the nephron. In the thick ascending limb (TAL) of Henle's loop, facilitates sodium paracellular permeability from the interstitial compartment to the lumen, contributing to the lumen-positive transepithelial potential that drives paracellular magnesium and calcium reabsorption. The protein is Claudin-16 of Mus musculus (Mouse).